Reading from the N-terminus, the 331-residue chain is Serine/threonine-protein phosphatase 6 catalytic subunit (331 aa).

Residues aspartate 79, histidine 81, aspartate 107, and asparagine 139 each coordinate Mn(2+). The active-site Proton donor is histidine 140. Mn(2+)-binding residues include histidine 189 and histidine 264.

This sequence belongs to the PPP phosphatase family. PP-6 (PP-V) subfamily. As to quaternary structure, forms a complex composed of catalytic subunit pph-6 and regulatory subunit saps-1; the interaction increases pph-6 and saps-1 protein stability. Mn(2+) serves as cofactor.

The protein localises to the cytoplasm. Its subcellular location is the cell cortex. It is found in the cytoskeleton. It localises to the spindle pole. It catalyses the reaction O-phospho-L-seryl-[protein] + H2O = L-seryl-[protein] + phosphate. The catalysed reaction is O-phospho-L-threonyl-[protein] + H2O = L-threonyl-[protein] + phosphate. In terms of biological role, catalytic subunit of protein phosphatase 6 (PP6). In complex with saps-1, promotes actomyosin contractility during cytokinesis by regulating the organization of cortical non-muscle myosin II nmy-2 and thus contributing to correct spindle positioning. Also required for the proper generation of pulling forces on spindle poles during anaphase by regulating the cortical localization of gpr-1, gpr-2 and lin-5. The chain is Serine/threonine-protein phosphatase 6 catalytic subunit from Caenorhabditis elegans.